Here is a 118-residue protein sequence, read N- to C-terminus: Ribosomal silencing factor RsfS (118 aa).

Belongs to the Iojap/RsfS family. Interacts with ribosomal protein uL14 (rplN).

It localises to the cytoplasm. Functions as a ribosomal silencing factor. Interacts with ribosomal protein uL14 (rplN), blocking formation of intersubunit bridge B8. Prevents association of the 30S and 50S ribosomal subunits and the formation of functional ribosomes, thus repressing translation. The chain is Ribosomal silencing factor RsfS from Bacillus subtilis (strain 168).